The sequence spans 185 residues: Putative lipoprotein LprB (185 aa).

An N-terminal signal peptide occupies residues 1 to 24; the sequence is MRRKVRRLTLAVSALVALFPAVAG. Cys-25 carries N-palmitoyl cysteine lipidation. The S-diacylglycerol cysteine moiety is linked to residue Cys-25. The interval 26–50 is disordered; that stretch reads SDSGDNKPGATIPSTPANAEGRHGP.

The protein localises to the cell membrane. The sequence is that of Putative lipoprotein LprB (lprB) from Mycobacterium bovis (strain ATCC BAA-935 / AF2122/97).